The primary structure comprises 317 residues: Pantothenate kinase (317 aa).

Position 99 to 106 (99 to 106 (GSVSVGKS)) interacts with ATP.

Belongs to the prokaryotic pantothenate kinase family.

Its subcellular location is the cytoplasm. The catalysed reaction is (R)-pantothenate + ATP = (R)-4'-phosphopantothenate + ADP + H(+). The protein operates within cofactor biosynthesis; coenzyme A biosynthesis; CoA from (R)-pantothenate: step 1/5. This Mannheimia succiniciproducens (strain KCTC 0769BP / MBEL55E) protein is Pantothenate kinase.